Reading from the N-terminus, the 448-residue chain is Phosphoglucosamine mutase (448 aa).

Catalysis depends on Ser-100, which acts as the Phosphoserine intermediate. Ser-100, Asp-240, Asp-242, and Asp-244 together coordinate Mg(2+). Ser-100 is modified (phosphoserine).

Belongs to the phosphohexose mutase family. The cofactor is Mg(2+). Activated by phosphorylation.

It catalyses the reaction alpha-D-glucosamine 1-phosphate = D-glucosamine 6-phosphate. Its function is as follows. Catalyzes the conversion of glucosamine-6-phosphate to glucosamine-1-phosphate. The protein is Phosphoglucosamine mutase of Alkaliphilus metalliredigens (strain QYMF).